We begin with the raw amino-acid sequence, 65 residues long: Large ribosomal subunit protein bL35 (65 aa).

The segment at 1-22 (MPKLKTKSGAAKRFKKTGKGGF) is disordered.

Belongs to the bacterial ribosomal protein bL35 family.

The chain is Large ribosomal subunit protein bL35 from Francisella philomiragia subsp. philomiragia (strain ATCC 25017 / CCUG 19701 / FSC 153 / O#319-036).